The primary structure comprises 381 residues: Succinyl-diaminopimelate desuccinylase (381 aa).

H71 contacts Zn(2+). Residue D73 is part of the active site. A Zn(2+)-binding site is contributed by D104. The active-site Proton acceptor is the E138. Residues E139, E167, and H353 each coordinate Zn(2+).

This sequence belongs to the peptidase M20A family. DapE subfamily. Homodimer. Zn(2+) is required as a cofactor. The cofactor is Co(2+).

The catalysed reaction is N-succinyl-(2S,6S)-2,6-diaminopimelate + H2O = (2S,6S)-2,6-diaminopimelate + succinate. It functions in the pathway amino-acid biosynthesis; L-lysine biosynthesis via DAP pathway; LL-2,6-diaminopimelate from (S)-tetrahydrodipicolinate (succinylase route): step 3/3. Its function is as follows. Catalyzes the hydrolysis of N-succinyl-L,L-diaminopimelic acid (SDAP), forming succinate and LL-2,6-diaminopimelate (DAP), an intermediate involved in the bacterial biosynthesis of lysine and meso-diaminopimelic acid, an essential component of bacterial cell walls. This Shewanella pealeana (strain ATCC 700345 / ANG-SQ1) protein is Succinyl-diaminopimelate desuccinylase.